Reading from the N-terminus, the 182-residue chain is NADH-quinone oxidoreductase subunit I (182 aa).

4Fe-4S ferredoxin-type domains follow at residues leucine 52–alanine 82 and aspartate 92–aspartate 121. [4Fe-4S] cluster contacts are provided by cysteine 62, cysteine 65, cysteine 68, cysteine 72, cysteine 101, cysteine 104, cysteine 107, and cysteine 111.

It belongs to the complex I 23 kDa subunit family. In terms of assembly, NDH-1 is composed of 13 different subunits. Subunits NuoA, H, J, K, L, M, N constitute the membrane sector of the complex. The cofactor is [4Fe-4S] cluster.

The protein localises to the cell inner membrane. It catalyses the reaction a quinone + NADH + 5 H(+)(in) = a quinol + NAD(+) + 4 H(+)(out). Its function is as follows. NDH-1 shuttles electrons from NADH, via FMN and iron-sulfur (Fe-S) centers, to quinones in the respiratory chain. The immediate electron acceptor for the enzyme in this species is believed to be ubiquinone. Couples the redox reaction to proton translocation (for every two electrons transferred, four hydrogen ions are translocated across the cytoplasmic membrane), and thus conserves the redox energy in a proton gradient. In Pseudomonas savastanoi pv. phaseolicola (strain 1448A / Race 6) (Pseudomonas syringae pv. phaseolicola (strain 1448A / Race 6)), this protein is NADH-quinone oxidoreductase subunit I.